The sequence spans 269 residues: Formamidopyrimidine-DNA glycosylase (269 aa).

Proline 2 acts as the Schiff-base intermediate with DNA in catalysis. Residue glutamate 3 is the Proton donor of the active site. Catalysis depends on lysine 57, which acts as the Proton donor; for beta-elimination activity. DNA contacts are provided by histidine 90, arginine 109, and arginine 150. Residues 235–269 (QVYGRAGEACLTCGTTIKRSKHGQRTTFYCPHCQR) form an FPG-type zinc finger. Catalysis depends on arginine 259, which acts as the Proton donor; for delta-elimination activity.

It belongs to the FPG family. Monomer. The cofactor is Zn(2+).

It catalyses the reaction Hydrolysis of DNA containing ring-opened 7-methylguanine residues, releasing 2,6-diamino-4-hydroxy-5-(N-methyl)formamidopyrimidine.. The catalysed reaction is 2'-deoxyribonucleotide-(2'-deoxyribose 5'-phosphate)-2'-deoxyribonucleotide-DNA = a 3'-end 2'-deoxyribonucleotide-(2,3-dehydro-2,3-deoxyribose 5'-phosphate)-DNA + a 5'-end 5'-phospho-2'-deoxyribonucleoside-DNA + H(+). Its function is as follows. Involved in base excision repair of DNA damaged by oxidation or by mutagenic agents. Acts as a DNA glycosylase that recognizes and removes damaged bases. Has a preference for oxidized purines, such as 7,8-dihydro-8-oxoguanine (8-oxoG). Has AP (apurinic/apyrimidinic) lyase activity and introduces nicks in the DNA strand. Cleaves the DNA backbone by beta-delta elimination to generate a single-strand break at the site of the removed base with both 3'- and 5'-phosphates. The sequence is that of Formamidopyrimidine-DNA glycosylase from Edwardsiella ictaluri (strain 93-146).